Here is a 146-residue protein sequence, read N- to C-terminus: Hemoglobin subunit beta (146 aa).

Val-1 carries the post-translational modification N-acetylvaline. In terms of domain architecture, Globin spans 2–146 (HLTGEEKSAV…VANALAHKYH (145 aa)). Thr-12 carries the phosphothreonine modification. Position 44 is a phosphoserine (Ser-44). Position 59 is an N6-acetyllysine (Lys-59). His-63 serves as a coordination point for heme b. Lys-82 is modified (N6-acetyllysine). Position 92 (His-92) interacts with heme b. Cys-93 carries the S-nitrosocysteine modification. Residue Lys-144 is modified to N6-acetyllysine.

Belongs to the globin family. Heterotetramer of two alpha chains and two beta chains. As to expression, red blood cells.

Its function is as follows. Involved in oxygen transport from the lung to the various peripheral tissues. This chain is Hemoglobin subunit beta (HBB), found in Saguinus oedipus (Cotton-top tamarin).